The sequence spans 89 residues: Small ribosomal subunit protein uS15 (89 aa).

Belongs to the universal ribosomal protein uS15 family. As to quaternary structure, part of the 30S ribosomal subunit. Forms a bridge to the 50S subunit in the 70S ribosome, contacting the 23S rRNA.

In terms of biological role, one of the primary rRNA binding proteins, it binds directly to 16S rRNA where it helps nucleate assembly of the platform of the 30S subunit by binding and bridging several RNA helices of the 16S rRNA. Forms an intersubunit bridge (bridge B4) with the 23S rRNA of the 50S subunit in the ribosome. In Thermomicrobium roseum (strain ATCC 27502 / DSM 5159 / P-2), this protein is Small ribosomal subunit protein uS15.